Consider the following 524-residue polypeptide: Cytochrome P450 monooxygenase ankB (524 aa).

Residues 22–42 (FHALSIQAPGLLLGTLLFYLF) traverse the membrane as a helical segment. Residue Cys-466 coordinates heme.

This sequence belongs to the cytochrome P450 family. Requires heme as cofactor.

It localises to the membrane. The catalysed reaction is cyclo(L-arginyl-tyrosyl) + reduced [NADPH--hemoprotein reductase] + O2 = cyclo(L-arginyl-L-dehydrotyrosyl) + oxidized [NADPH--hemoprotein reductase] + 2 H2O + H(+). It participates in alkaloid biosynthesis. Cytochrome P450 monooxygenase; part of the ank cluster that mediates the biosynthesis of NK13650 C, a highly modified cyclo-arginine-tyrosine dipeptide. AnkB is responsible for desaturation of the ankA product cyclo-Arg-Tyr diketopiperazine, likely through hydroxylation of the benzylic position followed by dehydration to yield a dehydro-cyclodipeptide. Within the pathway, the cyclodipeptide synthase ankA acts as the scaffold-generating enzyme and is responsible for formation of the cyclo-Arg-Tyr diketopiperazine (cRY) from L-Arg and L-Tyr. The ankA product cRY is desaturated by the cytochrome P450 monooxygenase ankB to yield a dehydro-cyclodipeptide intermediate. The FAD-dependent monooxygenase ankC then installs the m-OH, ankD catalyzes the attachment of L-homoserine, and ankE ligates citrate to the ankD product to yield NK13650 B. The O-methyltransferase ankF is responsible for methylation of the C-17 phenol group of NK13650 B to produce NK13650 D. Amidation of NK13650 D with L-Asp by ankG then leads to the production of NK13650 C, whereas amidation of NK13650 B produces NK13650 A. In Aspergillus thermomutatus (Neosartorya pseudofischeri), this protein is Cytochrome P450 monooxygenase ankB.